Reading from the N-terminus, the 501-residue chain is Glycerol kinase 1 (501 aa).

Thr-16 provides a ligand contact to ADP. ATP-binding residues include Thr-16, Thr-17, and Ser-18. A sn-glycerol 3-phosphate-binding site is contributed by Thr-16. Arg-20 is a binding site for ADP. Sn-glycerol 3-phosphate is bound by residues Arg-84, Glu-85, Tyr-135, and Asp-242. Residues Arg-84, Glu-85, Tyr-135, Asp-242, and Gln-243 each contribute to the glycerol site. ADP is bound by residues Thr-264 and Gly-307. ATP-binding residues include Thr-264, Gly-307, Gln-311, and Gly-408. Gly-408 provides a ligand contact to ADP.

The protein belongs to the FGGY kinase family.

It catalyses the reaction glycerol + ATP = sn-glycerol 3-phosphate + ADP + H(+). It functions in the pathway polyol metabolism; glycerol degradation via glycerol kinase pathway; sn-glycerol 3-phosphate from glycerol: step 1/1. Key enzyme in the regulation of glycerol uptake and metabolism. Catalyzes the phosphorylation of glycerol to yield sn-glycerol 3-phosphate. The polypeptide is Glycerol kinase 1 (Saccharolobus solfataricus (strain ATCC 35092 / DSM 1617 / JCM 11322 / P2) (Sulfolobus solfataricus)).